Consider the following 230-residue polypeptide: Cytidylate kinase (230 aa).

Residue Gly-12–Thr-20 coordinates ATP.

It belongs to the cytidylate kinase family. Type 1 subfamily.

It is found in the cytoplasm. The enzyme catalyses CMP + ATP = CDP + ADP. It catalyses the reaction dCMP + ATP = dCDP + ADP. The sequence is that of Cytidylate kinase from Corynebacterium diphtheriae (strain ATCC 700971 / NCTC 13129 / Biotype gravis).